Consider the following 793-residue polypeptide: Protein zer-1 homolog (793 aa).

3 LRR repeats span residues 84 to 108, 187 to 210, and 269 to 294; these read RTSLKIVNLRNSTLSSIGLETLMRH, LHDLGHLDLTSCVLANFSLEALGS, and LRHLTHLDISGTNLAGNGVATKESTT.

The protein belongs to the zyg-11 family.

Functionally, serves as substrate adapter subunit in an E3 ubiquitin ligase complex CG12084-cul-2-elongin BC. Targets substrates bearing N-terminal glycine degrons for proteasomal degradation. The protein is Protein zer-1 homolog of Drosophila melanogaster (Fruit fly).